Reading from the N-terminus, the 111-residue chain is uncharacterized protein (111 aa).

Residues 60-80 form a helical membrane-spanning segment; it reads TFGRFLAHISCLICILSKRIF.

Its subcellular location is the mitochondrion membrane. This is an uncharacterized protein from Arabidopsis thaliana (Mouse-ear cress).